Reading from the N-terminus, the 37-residue chain is Turripeptide Lol6.2 (37 aa).

3 disulfides stabilise this stretch: cysteine 4-cysteine 16, cysteine 8-cysteine 21, and cysteine 15-cysteine 29.

As to expression, expressed by the venom duct.

The protein localises to the secreted. Functionally, acts as a neurotoxin by inhibiting an ion channel. This Iotyrris olangoensis (Sea snail) protein is Turripeptide Lol6.2.